We begin with the raw amino-acid sequence, 343 residues long: Labda-7,13(16),14-triene synthase (343 aa).

D114 and E119 together coordinate Mg(2+). Positions 114–119 (DDVHVE) match the DDXXXE motif motif. R206 serves as a coordination point for substrate. Mg(2+) is bound by residues N252, S256, and E260. An NXXXSXXXE motif motif is present at residues 252 to 260 (NDLYSFAYE).

This sequence belongs to the terpene synthase family. It depends on Mg(2+) as a cofactor.

The catalysed reaction is (13E)-labda-7,13-dien-15-yl diphosphate = labda-7,13(16),14-triene + diphosphate. Involved in the biosynthesis of the labdane-type bicyclic diterpene labda-7,13(16),14-triene. Catalyzes the conversion of labda-7,13(E)-dienyl diphosphate to yield labda-7,13(16),14-triene. This is Labda-7,13(16),14-triene synthase from Streptomyces clavuligerus.